A 1166-amino-acid chain; its full sequence is Poly [ADP-ribose] polymerase tankyrase-2 (1166 aa).

4 ANK repeats span residues 23–52 (PSAR…VNSR), 57–86 (RKST…NVQA), 90–119 (GGLI…DPNA), and 123–152 (WNYT…EPTI). (3S)-3-hydroxyasparagine; by HIF1AN is present on N203. ANK repeat units lie at residues 210–239 (RKST…DVHA), 243–272 (GDLV…CVNA), 276–305 (WQFT…DPTL), 363–395 (THET…NTNE), 399–428 (EFLT…KVNA), 432–461 (LGQT…DPNI), and 463–489 (SLQG…SLGH). (3S)-3-hydroxyhistidine; by HIF1AN is present on H238. A (3S)-3-hydroxyasparagine; by HIF1AN modification is found at N271. At N427 the chain carries (3S)-3-hydroxyasparagine; by HIF1AN. At N518 the chain carries (3S)-3-hydroxyasparagine; by HIF1AN. 4 ANK repeats span residues 525–554 (RQST…DVHA), 558–587 (GGLV…VVNV), 591–620 (WKFT…DPTK), and 624–652 (DGNT…LLDA). The tract at residues 545 to 553 (LLQHGADVH) is HIF1AN-binding. A (3S)-3-hydroxyhistidine; by HIF1AN modification is found at H553. Position 586 is a (3S)-3-hydroxyasparagine; by HIF1AN (N586). (3S)-3-hydroxyasparagine; by HIF1AN occurs at positions 671, 706, and 739. ANK repeat units follow at residues 678-707 (RHST…DVNA), 711-740 (GGLI…CVNA), and 744-773 (WAFT…DPTL). The region spanning 873–936 (GIDFSITQFI…IKGVERLISG (64 aa)) is the SAM domain. A PARP catalytic domain is found at 959-1164 (SPDDKEFQSV…YQIVRPEGMV (206 aa)). The Zn(2+) site is built by C1081, H1084, C1089, and C1092.

The protein belongs to the ARTD/PARP family. As to quaternary structure, oligomerizes and associates with TNKS. Interacts with the cytoplasmic domain of LNPEP/Otase in SLC2A4/GLUT4-vesicles. Binds to the N-terminus of Grb14 and TRF1 with its ankyrin repeat region. Interacts with HIF1AN. Interacts with RNF146; this interaction leads to ubiquitination and proteasomal degradation. Interacts with NUMA1. Ubiquitinated by RNF146 when auto-poly-ADP-ribosylated, leading to its degradation. Deubiquitinated by USP25; leading to stabilization. Post-translationally, ADP-ribosylated (-auto). Poly-ADP-ribosylated protein is recognized by RNF146, followed by ubiquitination.

Its subcellular location is the cytoplasm. It localises to the golgi apparatus membrane. The protein localises to the nucleus. The protein resides in the chromosome. It is found in the telomere. The enzyme catalyses NAD(+) + (ADP-D-ribosyl)n-acceptor = nicotinamide + (ADP-D-ribosyl)n+1-acceptor + H(+).. It carries out the reaction L-aspartyl-[protein] + NAD(+) = 4-O-(ADP-D-ribosyl)-L-aspartyl-[protein] + nicotinamide. The catalysed reaction is L-glutamyl-[protein] + NAD(+) = 5-O-(ADP-D-ribosyl)-L-glutamyl-[protein] + nicotinamide. Poly-ADP-ribosyltransferase involved in various processes such as Wnt signaling pathway, telomere length and vesicle trafficking. Acts as an activator of the Wnt signaling pathway by mediating poly-ADP-ribosylation of AXIN1 and AXIN2, 2 key components of the beta-catenin destruction complex: poly-ADP-ribosylated target proteins are recognized by RNF146, which mediates their ubiquitination and subsequent degradation. Also mediates poly-ADP-ribosylation of BLZF1 and CASC3, followed by recruitment of RNF146 and subsequent ubiquitination. Mediates poly-ADP-ribosylation of TERF1, thereby contributing to the regulation of telomere length. Stimulates 26S proteasome activity. This Mus musculus (Mouse) protein is Poly [ADP-ribose] polymerase tankyrase-2.